Reading from the N-terminus, the 200-residue chain is 3-isopropylmalate dehydratase small subunit (200 aa).

It belongs to the LeuD family. LeuD type 1 subfamily. In terms of assembly, heterodimer of LeuC and LeuD.

The catalysed reaction is (2R,3S)-3-isopropylmalate = (2S)-2-isopropylmalate. Its pathway is amino-acid biosynthesis; L-leucine biosynthesis; L-leucine from 3-methyl-2-oxobutanoate: step 2/4. In terms of biological role, catalyzes the isomerization between 2-isopropylmalate and 3-isopropylmalate, via the formation of 2-isopropylmaleate. This Pectobacterium carotovorum subsp. carotovorum (strain PC1) protein is 3-isopropylmalate dehydratase small subunit.